We begin with the raw amino-acid sequence, 115 residues long: NADH-ubiquinone oxidoreductase chain 3 (115 aa).

A run of 3 helical transmembrane segments spans residues 4–24 (FIVLLVNISLASCLILIAFWL), 55–75 (FFLVAITFLLFDLEIALLLPL), and 87–107 (TMLTSFILVSVLAMGLAYEWL).

This sequence belongs to the complex I subunit 3 family. In terms of assembly, core subunit of respiratory chain NADH dehydrogenase (Complex I) which is composed of 45 different subunits. Interacts with TMEM186. Interacts with TMEM242.

The protein resides in the mitochondrion inner membrane. The enzyme catalyses a ubiquinone + NADH + 5 H(+)(in) = a ubiquinol + NAD(+) + 4 H(+)(out). Its function is as follows. Core subunit of the mitochondrial membrane respiratory chain NADH dehydrogenase (Complex I) which catalyzes electron transfer from NADH through the respiratory chain, using ubiquinone as an electron acceptor. Essential for the catalytic activity of complex I. This chain is NADH-ubiquinone oxidoreductase chain 3, found in Reithrodontomys megalotis (Western harvest mouse).